The sequence spans 281 residues: Diaminopimelate epimerase (281 aa).

Substrate is bound by residues N13, Q51, and N70. The Proton donor role is filled by C79. Residues 80–81 (GN), N163, N196, and 214–215 (ER) contribute to the substrate site. C223 functions as the Proton acceptor in the catalytic mechanism. 224 to 225 (GS) is a substrate binding site.

This sequence belongs to the diaminopimelate epimerase family. As to quaternary structure, homodimer.

It is found in the cytoplasm. It catalyses the reaction (2S,6S)-2,6-diaminopimelate = meso-2,6-diaminopimelate. The protein operates within amino-acid biosynthesis; L-lysine biosynthesis via DAP pathway; DL-2,6-diaminopimelate from LL-2,6-diaminopimelate: step 1/1. Catalyzes the stereoinversion of LL-2,6-diaminopimelate (L,L-DAP) to meso-diaminopimelate (meso-DAP), a precursor of L-lysine and an essential component of the bacterial peptidoglycan. This Alcanivorax borkumensis (strain ATCC 700651 / DSM 11573 / NCIMB 13689 / SK2) protein is Diaminopimelate epimerase.